A 259-amino-acid chain; its full sequence is Phosphate import ATP-binding protein PstB (259 aa).

In terms of domain architecture, ABC transporter spans 6-254 (SKNESVVFDV…PKDKRTEDYI (249 aa)). 45 to 52 (GPSGCGKS) contacts ATP.

This sequence belongs to the ABC transporter superfamily. Phosphate importer (TC 3.A.1.7) family. In terms of assembly, the complex is composed of two ATP-binding proteins (PstB), two transmembrane proteins (PstC and PstA) and a solute-binding protein (PstS).

It is found in the cell membrane. It catalyses the reaction phosphate(out) + ATP + H2O = ADP + 2 phosphate(in) + H(+). In terms of biological role, part of the ABC transporter complex PstSACB involved in phosphate import. Responsible for energy coupling to the transport system. The polypeptide is Phosphate import ATP-binding protein PstB (Desulfitobacterium hafniense (strain Y51)).